The chain runs to 250 residues: Triosephosphate isomerase (250 aa).

9-11 is a substrate binding site; it reads NWK. The active-site Electrophile is the His96. Residue Glu166 is the Proton acceptor of the active site. Residues Gly172, Ser212, and 233–234 contribute to the substrate site; that span reads GG.

This sequence belongs to the triosephosphate isomerase family. As to quaternary structure, homodimer.

It is found in the cytoplasm. It catalyses the reaction D-glyceraldehyde 3-phosphate = dihydroxyacetone phosphate. Its pathway is carbohydrate biosynthesis; gluconeogenesis. The protein operates within carbohydrate degradation; glycolysis; D-glyceraldehyde 3-phosphate from glycerone phosphate: step 1/1. In terms of biological role, involved in the gluconeogenesis. Catalyzes stereospecifically the conversion of dihydroxyacetone phosphate (DHAP) to D-glyceraldehyde-3-phosphate (G3P). This chain is Triosephosphate isomerase, found in Chlorobium luteolum (strain DSM 273 / BCRC 81028 / 2530) (Pelodictyon luteolum).